We begin with the raw amino-acid sequence, 957 residues long: Glycine dehydrogenase (decarboxylating) (957 aa).

Lysine 708 bears the N6-(pyridoxal phosphate)lysine mark.

This sequence belongs to the GcvP family. The glycine cleavage system is composed of four proteins: P, T, L and H. Pyridoxal 5'-phosphate is required as a cofactor.

It carries out the reaction N(6)-[(R)-lipoyl]-L-lysyl-[glycine-cleavage complex H protein] + glycine + H(+) = N(6)-[(R)-S(8)-aminomethyldihydrolipoyl]-L-lysyl-[glycine-cleavage complex H protein] + CO2. The glycine cleavage system catalyzes the degradation of glycine. The P protein binds the alpha-amino group of glycine through its pyridoxal phosphate cofactor; CO(2) is released and the remaining methylamine moiety is then transferred to the lipoamide cofactor of the H protein. This chain is Glycine dehydrogenase (decarboxylating), found in Shigella flexneri.